The primary structure comprises 66 residues: Large ribosomal subunit protein bL31 (66 aa).

Zn(2+) contacts are provided by Cys16, Cys18, Cys36, and Cys39.

It belongs to the bacterial ribosomal protein bL31 family. Type A subfamily. Part of the 50S ribosomal subunit. It depends on Zn(2+) as a cofactor.

Its function is as follows. Binds the 23S rRNA. The protein is Large ribosomal subunit protein bL31 of Nitratiruptor sp. (strain SB155-2).